The chain runs to 648 residues: DNA ligase (648 aa).

NAD(+) contacts are provided by residues 30–34 and 79–80; these read DEEYD and SQ. Catalysis depends on K110, which acts as the N6-AMP-lysine intermediate. Positions 131, 165, 280, and 304 each coordinate NAD(+). Positions 398, 401, 414, and 419 each coordinate Zn(2+). A BRCT domain is found at 573 to 648; the sequence is VSENPFKNKT…LTEEEMNSLF (76 aa).

Belongs to the NAD-dependent DNA ligase family. LigA subfamily. Requires Mg(2+) as cofactor. Mn(2+) serves as cofactor.

The enzyme catalyses NAD(+) + (deoxyribonucleotide)n-3'-hydroxyl + 5'-phospho-(deoxyribonucleotide)m = (deoxyribonucleotide)n+m + AMP + beta-nicotinamide D-nucleotide.. DNA ligase that catalyzes the formation of phosphodiester linkages between 5'-phosphoryl and 3'-hydroxyl groups in double-stranded DNA using NAD as a coenzyme and as the energy source for the reaction. It is essential for DNA replication and repair of damaged DNA. The chain is DNA ligase from Aliarcobacter butzleri (strain RM4018) (Arcobacter butzleri).